The sequence spans 289 residues: mRNA-capping enzyme small subunit (289 aa).

Heterodimer of a large and a small subunit.

It localises to the virion. The enzyme catalyses a 5'-end (5'-triphosphoguanosine)-ribonucleoside in mRNA + S-adenosyl-L-methionine = a 5'-end (N(7)-methyl 5'-triphosphoguanosine)-ribonucleoside in mRNA + S-adenosyl-L-homocysteine. Functionally, catalyzes the last reaction in the mRNA cap formation pathway. The chain is mRNA-capping enzyme small subunit from Fowlpox virus (strain NVSL) (FPV).